The following is a 413-amino-acid chain: Probable N-acetyltransferase HLS1-like (413 aa).

The 183-residue stretch at 5–187 (VEVREYDPSK…VNPVYAHRVN (183 aa)) folds into the N-acetyltransferase domain.

Belongs to the acetyltransferase family.

This Arabidopsis thaliana (Mouse-ear cress) protein is Probable N-acetyltransferase HLS1-like.